We begin with the raw amino-acid sequence, 455 residues long: Ribulose bisphosphate carboxylase large chain (455 aa).

Position 5 is an N6,N6,N6-trimethyllysine (Lys5). Positions 114 and 164 each coordinate substrate. Lys166 serves as the catalytic Proton acceptor. Residue Lys168 coordinates substrate. Mg(2+)-binding residues include Lys192, Asp194, and Glu195. N6-carboxylysine is present on Lys192. The active-site Proton acceptor is His285. Substrate contacts are provided by Arg286, His318, and Ser370.

This sequence belongs to the RuBisCO large chain family. Type I subfamily. As to quaternary structure, heterohexadecamer of 8 large chains and 8 small chains; disulfide-linked. The disulfide link is formed within the large subunit homodimers. It depends on Mg(2+) as a cofactor. In terms of processing, the disulfide bond which can form in the large chain dimeric partners within the hexadecamer appears to be associated with oxidative stress and protein turnover.

Its subcellular location is the plastid. The protein resides in the chloroplast. It catalyses the reaction 2 (2R)-3-phosphoglycerate + 2 H(+) = D-ribulose 1,5-bisphosphate + CO2 + H2O. The catalysed reaction is D-ribulose 1,5-bisphosphate + O2 = 2-phosphoglycolate + (2R)-3-phosphoglycerate + 2 H(+). RuBisCO catalyzes two reactions: the carboxylation of D-ribulose 1,5-bisphosphate, the primary event in carbon dioxide fixation, as well as the oxidative fragmentation of the pentose substrate in the photorespiration process. Both reactions occur simultaneously and in competition at the same active site. In Lupinus microcarpus var. densiflorus (Whitewhorl lupine), this protein is Ribulose bisphosphate carboxylase large chain.